The chain runs to 235 residues: 7-cyano-7-deazaguanine synthase (235 aa).

ATP is bound at residue 7–17 (CSGGLDSVSLA). Zn(2+) contacts are provided by Cys-185, Cys-193, Cys-196, and Cys-199.

The protein belongs to the QueC family. Requires Zn(2+) as cofactor.

It catalyses the reaction 7-carboxy-7-deazaguanine + NH4(+) + ATP = 7-cyano-7-deazaguanine + ADP + phosphate + H2O + H(+). The protein operates within purine metabolism; 7-cyano-7-deazaguanine biosynthesis. Catalyzes the ATP-dependent conversion of 7-carboxy-7-deazaguanine (CDG) to 7-cyano-7-deazaguanine (preQ(0)). This is 7-cyano-7-deazaguanine synthase from Allorhizobium ampelinum (strain ATCC BAA-846 / DSM 112012 / S4) (Agrobacterium vitis (strain S4)).